Reading from the N-terminus, the 408-residue chain is Peptidase T (408 aa).

His81 is a binding site for Zn(2+). Residue Asp83 is part of the active site. Asp142 contacts Zn(2+). The Proton acceptor role is filled by Glu176. The Zn(2+) site is built by Glu177, Asp199, and His381.

This sequence belongs to the peptidase M20B family. Requires Zn(2+) as cofactor.

It is found in the cytoplasm. The enzyme catalyses Release of the N-terminal residue from a tripeptide.. In terms of biological role, cleaves the N-terminal amino acid of tripeptides. The sequence is that of Peptidase T from Streptococcus gordonii (strain Challis / ATCC 35105 / BCRC 15272 / CH1 / DL1 / V288).